The following is a 200-amino-acid chain: 3-isopropylmalate dehydratase small subunit (200 aa).

Belongs to the LeuD family. LeuD type 1 subfamily. As to quaternary structure, heterodimer of LeuC and LeuD.

It carries out the reaction (2R,3S)-3-isopropylmalate = (2S)-2-isopropylmalate. It participates in amino-acid biosynthesis; L-leucine biosynthesis; L-leucine from 3-methyl-2-oxobutanoate: step 2/4. Its function is as follows. Catalyzes the isomerization between 2-isopropylmalate and 3-isopropylmalate, via the formation of 2-isopropylmaleate. The sequence is that of 3-isopropylmalate dehydratase small subunit from Edwardsiella ictaluri (strain 93-146).